A 164-amino-acid chain; its full sequence is Urease subunit beta (164 aa).

2 stretches are compositionally biased toward polar residues: residues M1–A10 and T20–E32. The disordered stretch occupies residues M1 to E32.

The protein belongs to the urease beta subunit family. Heterotrimer of UreA (gamma), UreB (beta) and UreC (alpha) subunits. Three heterotrimers associate to form the active enzyme.

The protein localises to the cytoplasm. It carries out the reaction urea + 2 H2O + H(+) = hydrogencarbonate + 2 NH4(+). The protein operates within nitrogen metabolism; urea degradation; CO(2) and NH(3) from urea (urease route): step 1/1. This chain is Urease subunit beta, found in Yersinia enterocolitica serotype O:8 / biotype 1B (strain NCTC 13174 / 8081).